Here is a 163-residue protein sequence, read N- to C-terminus: Bursicon (163 aa).

The first 23 residues, 1–23 (MKSSVCVLLKVLACILLPGGLNA), serve as a signal peptide directing secretion. 5 disulfides stabilise this stretch: Cys-39-Cys-88, Cys-53-Cys-102, Cys-63-Cys-123, Cys-67-Cys-125, and Cys-85-Cys-128. The 91-residue stretch at 39–129 (CQVTPVIHVL…PLECMCRPCT (91 aa)) folds into the CTCK domain.

As to quaternary structure, heterodimer of burs and pburs.

It localises to the secreted. Its function is as follows. Final heterodimeric neurohormone released at the end of the molting cycle, involved in the sclerotization (tanning) of the insect cuticle, melanization and wing spreading. The protein is Bursicon of Aedes aegypti (Yellowfever mosquito).